Consider the following 306-residue polypeptide: Agmatinase (306 aa).

Positions 126, 149, 151, 153, 230, and 232 each coordinate Mn(2+).

Belongs to the arginase family. Agmatinase subfamily. Mn(2+) serves as cofactor.

The catalysed reaction is agmatine + H2O = urea + putrescine. It participates in amine and polyamine biosynthesis; putrescine biosynthesis via agmatine pathway; putrescine from agmatine: step 1/1. Functionally, catalyzes the formation of putrescine from agmatine. The protein is Agmatinase of Escherichia coli (strain K12 / DH10B).